We begin with the raw amino-acid sequence, 333 residues long: Taste receptor type 2 member 38 (333 aa).

At methionine 1–threonine 17 the chain is on the extracellular side. Residues phenylalanine 18–leucine 38 traverse the membrane as a helical segment. Over valine 39–cysteine 55 the chain is Cytoplasmic. The helical transmembrane segment at valine 56–isoleucine 76 threads the bilayer. Over glutamine 77–alanine 94 the chain is Extracellular. A helical transmembrane segment spans residues isoleucine 95–leucine 115. Over leucine 116 to glutamine 142 the chain is Cytoplasmic. The chain crosses the membrane as a helical span at residues methionine 143–phenylalanine 163. The Extracellular segment spans residues serine 164–asparagine 190. N-linked (GlcNAc...) asparagine glycosylation is present at asparagine 178. Residues leucine 191–valine 211 form a helical membrane-spanning segment. Residues serine 212–serine 251 lie on the Cytoplasmic side of the membrane. The helical transmembrane segment at phenylalanine 252–leucine 272 threads the bilayer. The Extracellular segment spans residues tryptophan 273 to lysine 276. The helical transmembrane segment at isoleucine 277 to leucine 297 threads the bilayer. At isoleucine 298–cysteine 333 the chain is on the cytoplasmic side.

This sequence belongs to the G-protein coupled receptor T2R family.

The protein localises to the membrane. Receptor that may play a role in the perception of bitterness and is gustducin-linked. May play a role in sensing the chemical composition of the gastrointestinal content. The activity of this receptor may stimulate alpha gustducin, mediate PLC-beta-2 activation and lead to the gating of TRPM5. The protein is Taste receptor type 2 member 38 (TAS2R38) of Pan paniscus (Pygmy chimpanzee).